The sequence spans 325 residues: Tetraacyldisaccharide 4'-kinase (325 aa).

55–62 contributes to the ATP binding site; sequence TAGGNGKT.

It belongs to the LpxK family.

It catalyses the reaction a lipid A disaccharide + ATP = a lipid IVA + ADP + H(+). Its pathway is glycolipid biosynthesis; lipid IV(A) biosynthesis; lipid IV(A) from (3R)-3-hydroxytetradecanoyl-[acyl-carrier-protein] and UDP-N-acetyl-alpha-D-glucosamine: step 6/6. Transfers the gamma-phosphate of ATP to the 4'-position of a tetraacyldisaccharide 1-phosphate intermediate (termed DS-1-P) to form tetraacyldisaccharide 1,4'-bis-phosphate (lipid IVA). The chain is Tetraacyldisaccharide 4'-kinase from Salmonella newport (strain SL254).